A 469-amino-acid polypeptide reads, in one-letter code: Programmed cell death protein 4 (469 aa).

Position 1 is an N-acetylmethionine (Met1). Disordered stretches follow at residues 1-38 (MDVE…EIKN) and 58-128 (KAKR…GTPG). Residue Ser25 is modified to Phosphoserine. The Nuclear localization signal signature appears at 58–64 (KAKRRLR). Phosphoserine; by PKB and RPS6KB1 is present on Ser67. Residues Ser68, Ser71, Ser76, Ser78, Ser80, and Ser94 each carry the phosphoserine modification. Positions 70–76 (DSGRGDS) match the Phosphodegron motif. Residues 74 to 83 (GDSVSDSGSD) are compositionally biased toward low complexity. The span at 114–125 (KKGGAGGKGVWG) shows a compositional bias: gly residues. A Phosphotyrosine modification is found at Tyr152. In terms of domain architecture, MI 1 spans 163 to 284 (AFEKTLTPII…CNTYIDSYKG (122 aa)). The Nuclear localization signal motif lies at 241–250 (DKLLKDLPEL). 2 positions are modified to phosphoserine: Ser313 and Ser317. Positions 326-449 (HLVKEIDMLL…SKQLRDLCPS (124 aa)) constitute an MI 2 domain. At Ser457 the chain carries Phosphoserine; by PKB.

This sequence belongs to the PDCD4 family. As to quaternary structure, interacts (via MI domains) with EIF4A2. Interacts (via MI domains) with EIF4A1 (via N-terminal domain). Heterotrimer with EIF4A1; one molecule of PDCD4 binds two molecules of EIF4A1. Interacts with EIF4G1. May form a complex with EIF4A1 and EIF4G1. The interaction between PDCD4 and EIF4A1 interferes with the interaction between EIF4A1 and EIF4G. When phosphorylated, interacts with BTRC and FBXW11. In terms of processing, polyubiquitinated, leading to its proteasomal degradation. Rapidly degraded in response to mitogens. Phosphorylation of the phosphodegron promotes interaction with BTRC and proteasomal degradation. Phosphorylated at Ser-67 by RPS6KB1 in response to mitogens; phosphorylation promotes proteasomal degradation of PDCD4. As to expression, up-regulated in proliferative cells. Highly expressed in epithelial cells of the mammary gland. Reduced expression in lung cancer and colon carcinoma.

The protein resides in the nucleus. The protein localises to the cytoplasm. Functionally, inhibits translation initiation and cap-dependent translation. May excert its function by hindering the interaction between EIF4A1 and EIF4G. Inhibits the helicase activity of EIF4A. Modulates the activation of JUN kinase. Down-regulates the expression of MAP4K1, thus inhibiting events important in driving invasion, namely, MAPK85 activation and consequent JUN-dependent transcription. May play a role in apoptosis. Tumor suppressor. Inhibits tumor promoter-induced neoplastic transformation. Binds RNA. The chain is Programmed cell death protein 4 (PDCD4) from Homo sapiens (Human).